A 462-amino-acid chain; its full sequence is tRNA(Ile2) 2-agmatinylcytidine synthetase TiaS (462 aa).

The protein belongs to the TiaS family.

The protein localises to the cytoplasm. It catalyses the reaction cytidine(34) in tRNA(Ile2) + agmatine + ATP + H2O = 2-agmatinylcytidine(34) in tRNA(Ile2) + AMP + 2 phosphate + 2 H(+). Its function is as follows. ATP-dependent agmatine transferase that catalyzes the formation of 2-agmatinylcytidine (agm2C) at the wobble position (C34) of tRNA(Ile2), converting the codon specificity from AUG to AUA. The sequence is that of tRNA(Ile2) 2-agmatinylcytidine synthetase TiaS from Haloquadratum walsbyi (strain DSM 16790 / HBSQ001).